Consider the following 427-residue polypeptide: 3-phosphoshikimate 1-carboxyvinyltransferase (427 aa).

The 3-phosphoshikimate site is built by Lys-22, Ser-23, and Arg-27. A phosphoenolpyruvate-binding site is contributed by Lys-22. Residues Gly-96 and Arg-124 each coordinate phosphoenolpyruvate. 7 residues coordinate 3-phosphoshikimate: Ser-169, Ser-170, Gln-171, Ser-197, Asp-313, Asn-336, and Lys-340. Gln-171 contributes to the phosphoenolpyruvate binding site. Asp-313 functions as the Proton acceptor in the catalytic mechanism. The phosphoenolpyruvate site is built by Arg-344, Arg-386, and Lys-411.

Belongs to the EPSP synthase family. Monomer.

It is found in the cytoplasm. It carries out the reaction 3-phosphoshikimate + phosphoenolpyruvate = 5-O-(1-carboxyvinyl)-3-phosphoshikimate + phosphate. It functions in the pathway metabolic intermediate biosynthesis; chorismate biosynthesis; chorismate from D-erythrose 4-phosphate and phosphoenolpyruvate: step 6/7. Catalyzes the transfer of the enolpyruvyl moiety of phosphoenolpyruvate (PEP) to the 5-hydroxyl of shikimate-3-phosphate (S3P) to produce enolpyruvyl shikimate-3-phosphate and inorganic phosphate. This is 3-phosphoshikimate 1-carboxyvinyltransferase from Salmonella schwarzengrund (strain CVM19633).